We begin with the raw amino-acid sequence, 423 residues long: UDP-N-acetylglucosamine 1-carboxyvinyltransferase (423 aa).

21–22 (KN) is a binding site for phosphoenolpyruvate. R92 is a UDP-N-acetyl-alpha-D-glucosamine binding site. The active-site Proton donor is C116. 2-(S-cysteinyl)pyruvic acid O-phosphothioketal is present on C116. Positions 305 and 327 each coordinate UDP-N-acetyl-alpha-D-glucosamine.

It belongs to the EPSP synthase family. MurA subfamily.

The protein localises to the cytoplasm. It carries out the reaction phosphoenolpyruvate + UDP-N-acetyl-alpha-D-glucosamine = UDP-N-acetyl-3-O-(1-carboxyvinyl)-alpha-D-glucosamine + phosphate. It functions in the pathway cell wall biogenesis; peptidoglycan biosynthesis. Functionally, cell wall formation. Adds enolpyruvyl to UDP-N-acetylglucosamine. This Fervidobacterium nodosum (strain ATCC 35602 / DSM 5306 / Rt17-B1) protein is UDP-N-acetylglucosamine 1-carboxyvinyltransferase.